Reading from the N-terminus, the 870-residue chain is Leucine--tRNA ligase (870 aa).

The short motif at 42–52 (PYPSGKLHMGH) is the 'HIGH' region element. Residues 629-633 (KMSKS) carry the 'KMSKS' region motif. Lysine 632 contributes to the ATP binding site.

This sequence belongs to the class-I aminoacyl-tRNA synthetase family.

Its subcellular location is the cytoplasm. The enzyme catalyses tRNA(Leu) + L-leucine + ATP = L-leucyl-tRNA(Leu) + AMP + diphosphate. The sequence is that of Leucine--tRNA ligase from Azotobacter vinelandii (strain DJ / ATCC BAA-1303).